The chain runs to 120 residues: Large ribosomal subunit protein uL22 (120 aa).

Residues 1–20 (MFVNRRYTARGKNLPSSPKK) form a disordered region.

The protein belongs to the universal ribosomal protein uL22 family. In terms of assembly, part of the 50S ribosomal subunit.

In terms of biological role, this protein binds specifically to 23S rRNA; its binding is stimulated by other ribosomal proteins, e.g. L4, L17, and L20. It is important during the early stages of 50S assembly. It makes multiple contacts with different domains of the 23S rRNA in the assembled 50S subunit and ribosome. Functionally, the globular domain of the protein is located near the polypeptide exit tunnel on the outside of the subunit, while an extended beta-hairpin is found that lines the wall of the exit tunnel in the center of the 70S ribosome. The chain is Large ribosomal subunit protein uL22 from Borrelia hermsii (strain HS1 / DAH).